The following is a 399-amino-acid chain: Chorismate synthase (399 aa).

The tract at residues 41–72 (IQKDLDRRKPGQSMITTSRGEPDKVTINSGIQ) is disordered. NADP(+) is bound at residue Arg48. Residues 125-127 (RSS), Gly288, 303-307 (HAPVS), and Arg330 contribute to the FMN site. Composition is skewed to basic and acidic residues over residues 363–377 (PDRLDGRPGEYDTDY) and 389–399 (ADTHAKTIDDD). Residues 363 to 399 (PDRLDGRPGEYDTDYHPSSPQNDPEDADTHAKTIDDD) are disordered.

This sequence belongs to the chorismate synthase family. FMNH2 serves as cofactor.

It catalyses the reaction 5-O-(1-carboxyvinyl)-3-phosphoshikimate = chorismate + phosphate. It functions in the pathway metabolic intermediate biosynthesis; chorismate biosynthesis; chorismate from D-erythrose 4-phosphate and phosphoenolpyruvate: step 7/7. In terms of biological role, catalyzes the anti-1,4-elimination of the C-3 phosphate and the C-6 proR hydrogen from 5-enolpyruvylshikimate-3-phosphate (EPSP) to yield chorismate, which is the branch point compound that serves as the starting substrate for the three terminal pathways of aromatic amino acid biosynthesis. This reaction introduces a second double bond into the aromatic ring system. This is Chorismate synthase from Haloarcula marismortui (strain ATCC 43049 / DSM 3752 / JCM 8966 / VKM B-1809) (Halobacterium marismortui).